The sequence spans 70 residues: Large ribosomal subunit protein bL31c (70 aa).

Belongs to the bacterial ribosomal protein bL31 family. Type A subfamily. In terms of assembly, part of the 50S ribosomal subunit.

It localises to the plastid. Its subcellular location is the chloroplast. Functionally, binds the 23S rRNA. The protein is Large ribosomal subunit protein bL31c of Pyropia yezoensis (Susabi-nori).